The following is a 449-amino-acid chain: UNC93-like protein MFSD11 (449 aa).

A helical transmembrane segment spans residues 8-28 (LFNIIILGVAFMFMFTAFQTC). The N-linked (GlcNAc...) asparagine glycan is linked to Asn-40. Helical transmembrane passes span 53 to 73 (AIIY…VAIV), 74 to 94 (GPQL…AVFN), 96 to 116 (PFPW…AVLW), 138 to 158 (IFWA…YFAW), and 170 to 190 (RTVF…FFLI). Ser-204 carries the phosphoserine modification. 6 consecutive transmembrane segments (helical) span residues 239-259 (MLLL…FSGV), 277-297 (LIGL…SLFG), 309-329 (PVVL…FLNM), 359-379 (FLLG…LGFL), 385-405 (APAF…AFFY), and 410-430 (LLHW…LSFF).

Belongs to the unc-93 family.

Its subcellular location is the membrane. This Pongo abelii (Sumatran orangutan) protein is UNC93-like protein MFSD11 (MFSD11).